The sequence spans 217 residues: Cytidylate kinase (217 aa).

10–18 (GPAGAGKST) lines the ATP pocket.

The protein belongs to the cytidylate kinase family. Type 1 subfamily.

The protein localises to the cytoplasm. It carries out the reaction CMP + ATP = CDP + ADP. It catalyses the reaction dCMP + ATP = dCDP + ADP. The chain is Cytidylate kinase from Clostridium botulinum (strain Langeland / NCTC 10281 / Type F).